Consider the following 281-residue polypeptide: Large ribosomal subunit protein uL2 (281 aa).

Residues 210-281 form a disordered region; that stretch reads RTRYAGQRPH…RGRKRGPHTR (72 aa). The segment covering 254–281 has biased composition (basic residues); the sequence is TVGKKTRSHKARSNKFIVRGRKRGPHTR.

It belongs to the universal ribosomal protein uL2 family. Part of the 50S ribosomal subunit. Forms a bridge to the 30S subunit in the 70S ribosome.

Functionally, one of the primary rRNA binding proteins. Required for association of the 30S and 50S subunits to form the 70S ribosome, for tRNA binding and peptide bond formation. It has been suggested to have peptidyltransferase activity; this is somewhat controversial. Makes several contacts with the 16S rRNA in the 70S ribosome. In Limosilactobacillus reuteri subsp. reuteri (strain JCM 1112) (Lactobacillus reuteri), this protein is Large ribosomal subunit protein uL2.